A 256-amino-acid chain; its full sequence is DNA repair protein RecO (256 aa).

The protein belongs to the RecO family.

Functionally, involved in DNA repair and RecF pathway recombination. The polypeptide is DNA repair protein RecO (Anaeromyxobacter sp. (strain Fw109-5)).